Reading from the N-terminus, the 708-residue chain is MGMSKSHSFFGYPLSIFFIVVNEFCERFSYYGMRAILILYFTNFISWDDNLSTAIYHTFVALCYLTPILGALIADSWLGKFKTIVSLSIVYTIGQAVTSVSSINDLTDHNHDGTPDSLPVHVVLSLIGLALIALGTGGIKPCVSAFGGDQFEEGQEKQRNRFFSIFYLAINAGSLLSTIITPMLRVQQCGIHSKQACYPLAFGVPAALMAVALIVFVLGSGMYKKFKPQGNIMGKVAKCIGFAIKNRFRHRSKAFPKREHWLDWAKEKYDERLISQIKMVTRVMFLYIPLPMFWALFDQQGSRWTLQATTMSGKIGALEIQPDQMQTVNAILIVIMVPIFDAVLYPLIAKCGFNFTSLKKMAVGMVLASMAFVVAAIVQVEIDKTLPVFPKGNEVQIKVLNIGNNTMNISLPGEMVTLGPMSQTNAFMTFDVNKLTRINISSPGSPVTAVTDDFKQGQRHTLLVWAPNHYQVVKDGLNQKPEKGENGIRFVNTFNELITITMSGKVYANISSYNASTYQFFPSGIKGFTISSTEIPPQCQPNFNTFYLEFGSAYTYIVQRKNDSCPEVKVFEDISANTVNMALQIPQYFLLTCGEVVFSVTGLEFSYSQAPSNMKSVLQAGWLLTVAVGNIIVLIVAGAGQFSKQWAEYILFAALLLVVCVIFAIMARFYTYINPAEIEAQFDEDEKKNRLEKSNPYFMSGANSQKQM.

Residues 1–21 (MGMSKSHSFFGYPLSIFFIVV) form a helical membrane-spanning segment. Residues 22–53 (NEFCERFSYYGMRAILILYFTNFISWDDNLST) are Extracellular-facing. Asn-50 is a glycosylation site (N-linked (GlcNAc...) asparagine). The chain crosses the membrane as a helical span at residues 54–74 (AIYHTFVALCYLTPILGALIA). Residues 75-82 (DSWLGKFK) lie on the Cytoplasmic side of the membrane. A helical transmembrane segment spans residues 83–103 (TIVSLSIVYTIGQAVTSVSSI). Topologically, residues 104 to 118 (NDLTDHNHDGTPDSL) are extracellular. A helical membrane pass occupies residues 119 to 139 (PVHVVLSLIGLALIALGTGGI). Over 140 to 161 (KPCVSAFGGDQFEEGQEKQRNR) the chain is Cytoplasmic. Residues 162-182 (FFSIFYLAINAGSLLSTIITP) form a helical membrane-spanning segment. Residues 183–198 (MLRVQQCGIHSKQACY) are Extracellular-facing. A helical transmembrane segment spans residues 199-219 (PLAFGVPAALMAVALIVFVLG). Topologically, residues 220–276 (SGMYKKFKPQGNIMGKVAKCIGFAIKNRFRHRSKAFPKREHWLDWAKEKYDERLISQ) are cytoplasmic. A helical membrane pass occupies residues 277-297 (IKMVTRVMFLYIPLPMFWALF). Topologically, residues 298 to 327 (DQQGSRWTLQATTMSGKIGALEIQPDQMQT) are extracellular. Residues 328–348 (VNAILIVIMVPIFDAVLYPLI) traverse the membrane as a helical segment. Topologically, residues 349 to 361 (AKCGFNFTSLKKM) are cytoplasmic. The helical transmembrane segment at 362-382 (AVGMVLASMAFVVAAIVQVEI) threads the bilayer. The Extracellular segment spans residues 383–584 (DKTLPVFPKG…SANTVNMALQ (202 aa)). Residues 383 to 584 (DKTLPVFPKG…SANTVNMALQ (202 aa)) are extracellular domain (ECD). Residues Asn-404, Asn-408, Asn-439, Asn-509, Asn-514, and Asn-562 are each glycosylated (N-linked (GlcNAc...) asparagine). The chain crosses the membrane as a helical span at residues 585-605 (IPQYFLLTCGEVVFSVTGLEF). At 606–619 (SYSQAPSNMKSVLQ) the chain is on the cytoplasmic side. Residues 620-640 (AGWLLTVAVGNIIVLIVAGAG) form a helical membrane-spanning segment. Residues 641–645 (QFSKQ) lie on the Extracellular side of the membrane. Residues 646 to 666 (WAEYILFAALLLVVCVIFAIM) traverse the membrane as a helical segment. Residues 667 to 708 (ARFYTYINPAEIEAQFDEDEKKNRLEKSNPYFMSGANSQKQM) lie on the Cytoplasmic side of the membrane.

This sequence belongs to the major facilitator superfamily. Proton-dependent oligopeptide transporter (POT/PTR) (TC 2.A.17) family. In terms of assembly, interacts (via extracellular domain region) with trypsin. Expressed in small intestine.

The protein localises to the apical cell membrane. It carries out the reaction a dipeptide(out) + H(+)(out) = a dipeptide(in) + H(+)(in). It catalyses the reaction an L-amino acid tripeptide(out) + H(+)(out) = an L-amino acid tripeptide(in) + H(+)(in). The catalysed reaction is L-alanyl-L-lysine(out) + H(+)(out) = L-alanyl-L-lysine(in) + H(+)(in). The enzyme catalyses L-alanyl-L-proline(out) + H(+)(out) = L-alanyl-L-proline(in) + H(+)(in). It carries out the reaction L-alanyl-L-valine(out) + H(+)(out) = L-alanyl-L-valine(in) + H(+)(in). It catalyses the reaction carnosine(out) + H(+)(out) = carnosine(in) + H(+)(in). The catalysed reaction is glycyl-L-glutamine(out) + H(+)(out) = glycyl-L-glutamine(in) + H(+)(in). The enzyme catalyses glycyl-L-leucine(out) + H(+)(out) = glycyl-L-leucine(in) + H(+)(in). It carries out the reaction glycyl-L-proline(out) + H(+)(out) = glycyl-L-proline(in) + H(+)(in). It catalyses the reaction glycyl-sarcosine(out) + H(+)(out) = glycyl-sarcosine(in) + H(+)(in). The catalysed reaction is L-leucyl-L-leucine(out) + H(+)(out) = L-leucyl-L-leucine(in) + H(+)(in). The enzyme catalyses L-leucyl-L-proline(out) + H(+)(out) = L-leucyl-L-proline(in) + H(+)(in). It carries out the reaction L-phenylalanyl-L-leucine(out) + H(+)(out) = L-phenylalanyl-L-leucine(in) + H(+)(in). It catalyses the reaction L-phenylalanyl-L-phenylalanine(out) + H(+)(out) = L-phenylalanyl-L-phenylalanine(in) + H(+)(in). The catalysed reaction is L-lysyl-glycine(out) + H(+)(out) = L-lysyl-glycine(in) + H(+)(in). The enzyme catalyses L-tyrosylglycine(out) + H(+)(out) = L-tyrosylglycine(in) + H(+)(in). It carries out the reaction L-alanyl-L-aspartate(out) + 2 H(+)(out) = L-alanyl-L-aspartate(in) + 2 H(+)(in). It catalyses the reaction L-aspartyl-glycine(out) + 2 H(+)(out) = L-aspartyl-glycine(in) + 2 H(+)(in). The catalysed reaction is glycyl-L-aspartate(out) + 2 H(+)(out) = glycyl-L-aspartate(in) + 2 H(+)(in). The enzyme catalyses glycyl-L-glutamate(out) + 2 H(+)(out) = glycyl-L-glutamate(in) + 2 H(+)(in). It carries out the reaction L-alanyl-L-leucyl-L-alanine(out) + H(+)(out) = L-alanyl-L-leucyl-L-alanine(in) + H(+)(in). It catalyses the reaction L-alanyl-L-prolylglycine(out) + H(+)(out) = L-alanyl-L-prolylglycine(in) + H(+)(in). The catalysed reaction is glycylglycyl-L-isoleucine(out) + H(+)(out) = glycylglycyl-L-isoleucine(in) + H(+)(in). The enzyme catalyses glycylglycyl-L-proline(out) + H(+)(out) = glycylglycyl-L-proline(in) + H(+)(in). It carries out the reaction L-methionyl-L-phenylalanyl-L-methionine(out) + H(+)(out) = L-methionyl-L-phenylalanyl-L-methionine(in) + H(+)(in). It catalyses the reaction N-acetyl-D-muramoyl-L-alanyl-D-isoglutamine(out) + 2 H(+)(out) = N-acetyl-D-muramoyl-L-alanyl-D-isoglutamine(in) + 2 H(+)(in). The catalysed reaction is N(alpha)-formyl-L-methionyl-L-leucyl-L-phenylalanine(out) + 2 H(+)(out) = N(alpha)-formyl-L-methionyl-L-leucyl-L-phenylalanine(in) + 2 H(+)(in). Its function is as follows. Electrogenic proton-coupled amino-acid transporter that transports oligopeptides of 2 to 4 amino acids with a preference for dipeptides. Transports neutral and monovalently charged peptides with a proton to peptide stoichiometry of 1:1 or 2:1. Primarily responsible for the absorption of dietary di- and tripeptides from the small intestinal lumen. Mediates transepithelial transport of muramyl and N-formylated bacterial dipeptides contributing to recognition of pathogenic bacteria by the mucosal immune system. This Homo sapiens (Human) protein is Solute carrier family 15 member 1.